The sequence spans 133 residues: Agglutinin alpha chain (133 aa).

Residues 1-133 (GVTFDDGAYT…LDYFSIYLSL (133 aa)) enclose the Jacalin-type lectin domain.

Belongs to the jacalin lectin family. In terms of assembly, formed of four alpha chains and four beta chains.

In terms of biological role, D-galactose-specific lectin, binds the T-antigen structure Gal-beta1,3-GalNAc. The polypeptide is Agglutinin alpha chain (Maclura pomifera (Osage orange)).